A 2615-amino-acid chain; its full sequence is Probable serine/threonine-protein kinase roco7 (2615 aa).

Low complexity predominate over residues 1–13 (MDGYSSLSSSGNS). Disordered regions lie at residues 1 to 35 (MDGY…NYNQ), 275 to 297 (STPT…NSNN), 533 to 623 (QNIN…GGLN), and 946 to 998 (SSSS…ISEQ). Composition is skewed to low complexity over residues 533-560 (QNIN…SSRS), 567-614 (NSST…NNNN), and 946-996 (SSSS…SNIS). The COR domain maps to 1441–1631 (SVKEAYARNK…LCIWQNGMVL (191 aa)). Residues 1775–2042 (LKFGPQLGSG…ERLSTMQKTF (268 aa)) enclose the Protein kinase domain. ATP contacts are provided by residues 1781 to 1789 (LGSGSYANV) and Lys1802. Asp1899 functions as the Proton acceptor in the catalytic mechanism. Disordered regions lie at residues 2061-2158 (QINQ…SHSG) and 2176-2209 (GIGS…YESG). Composition is skewed to low complexity over residues 2073–2158 (SQAA…SHSG) and 2182–2209 (NQHQ…YESG). WD repeat units lie at residues 2491-2527 (GIIK…LVWD) and 2533-2574 (RMVQ…TTYS).

The protein belongs to the protein kinase superfamily. TKL Ser/Thr protein kinase family. ROCO subfamily.

It carries out the reaction L-seryl-[protein] + ATP = O-phospho-L-seryl-[protein] + ADP + H(+). The catalysed reaction is L-threonyl-[protein] + ATP = O-phospho-L-threonyl-[protein] + ADP + H(+). In Dictyostelium discoideum (Social amoeba), this protein is Probable serine/threonine-protein kinase roco7 (roco7).